Reading from the N-terminus, the 1558-residue chain is Arginine-glutamic acid dipeptide repeats protein (1558 aa).

Over residues 1-36 (MTADKDKDKDKEKDRDRDRDRERDKRDKARESENAR) the composition is skewed to basic and acidic residues. Residues 1–90 (MTADKDKDKD…KKKSRYERTD (90 aa)) are disordered. Phosphoserine occurs at positions 53 and 56. Residues 74-85 (KSRKKPPKKKSR) are compositionally biased toward basic residues. Positions 103–283 (VVYRPGDCVY…PETRRLNSTQ (181 aa)) constitute a BAH domain. The residue at position 120 (T120) is a Phosphothreonine. Phosphoserine is present on residues S142 and S304. The ELM2 domain occupies 284 to 387 (GEIRVGPSHQ…KALQRLVKKP (104 aa)). In terms of domain architecture, SANT spans 391–443 (LIEKCWTEDEVKRFVKGLRQYGKNFFRIRKELLPSKETGELITFYYYWKKTPE). The segment at 464–495 (TRTASTPVNTPSRPPSSEFLDLSSASEDDFDS) is disordered. Residues 465–474 (RTASTPVNTP) are compositionally biased toward polar residues. Residues 479 to 488 (SSEFLDLSSA) show a composition bias toward low complexity. The segment at 507-532 (CRHCFTTTSKDWHHGGRENILLCTDC) adopts a GATA-type zinc-finger fold. Residues 542–1125 (LPPIEKPVDP…PSHASQSARF (584 aa)) are disordered. K560 is covalently cross-linked (Glycyl lysine isopeptide (Lys-Gly) (interchain with G-Cter in SUMO2)). Position 593 is a phosphothreonine (T593). Phosphoserine is present on residues S594, S600, and S613. Residues 609–623 (SGRNSPSAASTSSND) show a composition bias toward low complexity. Basic and acidic residues predominate over residues 624–640 (SKAETVKKSAKKVKEEA). A Glycyl lysine isopeptide (Lys-Gly) (interchain with G-Cter in SUMO2) cross-link involves residue K637. 4 positions are modified to phosphoserine: S642, S656, S675, and S679. A compositionally biased stretch (basic and acidic residues) spans 652–673 (EKVASDTEDTDRITSKKTKTQE). The segment covering 688–708 (SDSRSVNDEGSSDPKDIDQDN) has biased composition (basic and acidic residues). Over residues 709 to 720 (RSTSPSIPSPQD) the composition is skewed to polar residues. Residues 726–752 (DSSAQQQMLQAQPPALQAPSGAASAPS) are compositionally biased toward low complexity. Residues 778–792 (SPATSQPPNQTQSTV) are compositionally biased toward polar residues. Positions 806–823 (LHPPRLPSPHPPLQPMTA) are enriched in pro residues. 3 stretches are compositionally biased toward low complexity: residues 824–857 (PPSQ…LLQH), 865–874 (GLPSQPSQGQ), and 891–901 (QLPASQSALQP). Over residues 902 to 932 (QQPPREQPLPPAPLAMPHIKPPPTTPIPQLP) the composition is skewed to pro residues. A compositionally biased stretch (low complexity) spans 962–972 (KPLSSLSTHHP). Residues 1012-1023 (HPTTGLHQVPSQ) show a composition bias toward polar residues. Residues 1027–1053 (PQHPFVPGGPPPITPPSCPPTSTPPAG) are compositionally biased toward pro residues. Residues 1054–1077 (PSSSSQPPCSAAVSSGGSVPGAPS) show a composition bias toward low complexity. Phosphoserine occurs at positions 1098, 1105, and 1107. The span at 1098-1109 (SPPPPPRSPSPE) shows a compositional bias: pro residues. A Phosphothreonine modification is found at T1111. A coiled-coil region spans residues 1148–1203 (GSKLAKKREEAIEKAKREAEQKAREEREREKEKEKEREREREREREAERAAKASSS). K1150 is subject to N6-acetyllysine. A compositionally biased stretch (basic and acidic residues) spans 1154-1198 (KREEAIEKAKREAEQKAREEREREKEKEKEREREREREREAERAA). The segment at 1154–1238 (KREEAIEKAK…TTIAAVPPYI (85 aa)) is disordered. Position 1251 is a phosphotyrosine (Y1251). A Phosphoserine modification is found at S1258.

In terms of assembly, interacts with HDAC1 and ATN1. Interaction with ATN1 is improved when the poly-Gln region of ATN1 is extended. Interacts with FAT1.

The protein resides in the nucleus. Its subcellular location is the PML body. Functionally, plays a role as a transcriptional repressor during development. May play a role in the control of cell survival. This is Arginine-glutamic acid dipeptide repeats protein (Rere) from Mus musculus (Mouse).